The chain runs to 202 residues: Kunitz trypsin inhibitor 7 (202 aa).

The first 25 residues, 1 to 25 (MKTFRSMLISLLLVAITTTSGVVEG), serve as a signal peptide directing secretion. A disulfide bridge links C69 with C115. N93, N136, N144, and N198 each carry an N-linked (GlcNAc...) asparagine glycan.

The protein belongs to the protease inhibitor I3 (leguminous Kunitz-type inhibitor) family.

Its function is as follows. Exhibits Kunitz trypsin protease inhibitor activity. The polypeptide is Kunitz trypsin inhibitor 7 (Arabidopsis thaliana (Mouse-ear cress)).